A 172-amino-acid chain; its full sequence is MNLTHYIASIENYPKEGITFRDISPLMADGKAYSYAIREICQYAADKEIDMIVGPEARGFIIGCPVAVELGIGFAPVRKPGKLPREVVSADYEKEYGLDTLTMHSDAIKPGQRVLIVDDLLATGGTVKATIEMVEKLGGVVAGCAFLIELDGLNGRQALGDIDYKVLMNFPG.

The protein belongs to the purine/pyrimidine phosphoribosyltransferase family. As to quaternary structure, homodimer.

The protein resides in the cytoplasm. It carries out the reaction AMP + diphosphate = 5-phospho-alpha-D-ribose 1-diphosphate + adenine. It functions in the pathway purine metabolism; AMP biosynthesis via salvage pathway; AMP from adenine: step 1/1. Its function is as follows. Catalyzes a salvage reaction resulting in the formation of AMP, that is energically less costly than de novo synthesis. This chain is Adenine phosphoribosyltransferase, found in Streptococcus uberis (strain ATCC BAA-854 / 0140J).